Reading from the N-terminus, the 429-residue chain is Ribosomal RNA small subunit methyltransferase B (429 aa).

Residues 254-260, aspartate 277, aspartate 303, and aspartate 322 contribute to the S-adenosyl-L-methionine site; that span reads CAAPGGK. Residue cysteine 375 is the Nucleophile of the active site.

The protein belongs to the class I-like SAM-binding methyltransferase superfamily. RsmB/NOP family.

Its subcellular location is the cytoplasm. It carries out the reaction cytidine(967) in 16S rRNA + S-adenosyl-L-methionine = 5-methylcytidine(967) in 16S rRNA + S-adenosyl-L-homocysteine + H(+). In terms of biological role, specifically methylates the cytosine at position 967 (m5C967) of 16S rRNA. The chain is Ribosomal RNA small subunit methyltransferase B from Escherichia coli O7:K1 (strain IAI39 / ExPEC).